The sequence spans 469 residues: Adenosylhomocysteinase (469 aa).

Residues T63, D139, and E164 each contribute to the substrate site. T165–T167 is an NAD(+) binding site. Substrate-binding residues include K194 and D198. NAD(+) contacts are provided by residues N199, G228–G233, E251, N300, I321–H323, and N375.

Belongs to the adenosylhomocysteinase family. NAD(+) is required as a cofactor.

The protein localises to the cytoplasm. It carries out the reaction S-adenosyl-L-homocysteine + H2O = L-homocysteine + adenosine. It functions in the pathway amino-acid biosynthesis; L-homocysteine biosynthesis; L-homocysteine from S-adenosyl-L-homocysteine: step 1/1. In terms of biological role, may play a key role in the regulation of the intracellular concentration of adenosylhomocysteine. The sequence is that of Adenosylhomocysteinase from Pseudomonas putida (strain GB-1).